A 149-amino-acid polypeptide reads, in one-letter code: Transcriptional repressor NrdR (149 aa).

Residues 3 to 34 (CPFCSATDTKVIDSRLVADGHQVRRRRECTLC) fold into a zinc finger. An ATP-cone domain is found at 49–139 (PRVIKRDDTR…VYRAFEDVSQ (91 aa)).

It belongs to the NrdR family. It depends on Zn(2+) as a cofactor.

Functionally, negatively regulates transcription of bacterial ribonucleotide reductase nrd genes and operons by binding to NrdR-boxes. This chain is Transcriptional repressor NrdR, found in Shewanella denitrificans (strain OS217 / ATCC BAA-1090 / DSM 15013).